A 411-amino-acid polypeptide reads, in one-letter code: Phosphoglycerate kinase (411 aa).

Residues 1-24 (MTGLCPLHQPSPLDHPHSGGTPMQ) form a disordered region. Substrate is bound by residues 41-43 (DYN), arginine 56, 79-82 (HFGR), arginine 139, and arginine 172. Residues lysine 222, glycine 310, glutamate 341, and 369–372 (GGDS) contribute to the ATP site.

This sequence belongs to the phosphoglycerate kinase family. Monomer.

It localises to the cytoplasm. The catalysed reaction is (2R)-3-phosphoglycerate + ATP = (2R)-3-phospho-glyceroyl phosphate + ADP. The protein operates within carbohydrate degradation; glycolysis; pyruvate from D-glyceraldehyde 3-phosphate: step 2/5. This Deinococcus radiodurans (strain ATCC 13939 / DSM 20539 / JCM 16871 / CCUG 27074 / LMG 4051 / NBRC 15346 / NCIMB 9279 / VKM B-1422 / R1) protein is Phosphoglycerate kinase.